A 209-amino-acid chain; its full sequence is A-type ATP synthase subunit D (209 aa).

Belongs to the V-ATPase D subunit family. Has multiple subunits with at least A(3), B(3), C, D, E, F, H, I and proteolipid K(x).

It is found in the cell membrane. Component of the A-type ATP synthase that produces ATP from ADP in the presence of a proton gradient across the membrane. In Archaeoglobus fulgidus (strain ATCC 49558 / DSM 4304 / JCM 9628 / NBRC 100126 / VC-16), this protein is A-type ATP synthase subunit D.